Here is a 505-residue protein sequence, read N- to C-terminus: Glycerol kinase 3 (505 aa).

Position 12 (T12) interacts with ADP. 3 residues coordinate ATP: T12, T13, and S14. Position 12 (T12) interacts with sn-glycerol 3-phosphate. R16 contributes to the ADP binding site. Residues R82, E83, Y134, and D249 each contribute to the sn-glycerol 3-phosphate site. Residues R82, E83, Y134, D249, and Q250 each contribute to the glycerol site. Residues T271 and G315 each coordinate ADP. Positions 271, 315, 319, and 416 each coordinate ATP. 2 residues coordinate ADP: G416 and N420.

It belongs to the FGGY kinase family.

The catalysed reaction is glycerol + ATP = sn-glycerol 3-phosphate + ADP + H(+). It functions in the pathway polyol metabolism; glycerol degradation via glycerol kinase pathway; sn-glycerol 3-phosphate from glycerol: step 1/1. Its activity is regulated as follows. Inhibited by fructose 1,6-bisphosphate (FBP). In terms of biological role, key enzyme in the regulation of glycerol uptake and metabolism. Catalyzes the phosphorylation of glycerol to yield sn-glycerol 3-phosphate. The chain is Glycerol kinase 3 from Streptomyces avermitilis (strain ATCC 31267 / DSM 46492 / JCM 5070 / NBRC 14893 / NCIMB 12804 / NRRL 8165 / MA-4680).